The primary structure comprises 182 residues: Adenine phosphoribosyltransferase (182 aa).

The protein belongs to the purine/pyrimidine phosphoribosyltransferase family. Homodimer.

The protein resides in the cytoplasm. The catalysed reaction is AMP + diphosphate = 5-phospho-alpha-D-ribose 1-diphosphate + adenine. It functions in the pathway purine metabolism; AMP biosynthesis via salvage pathway; AMP from adenine: step 1/1. In terms of biological role, catalyzes a salvage reaction resulting in the formation of AMP, that is energically less costly than de novo synthesis. The polypeptide is Adenine phosphoribosyltransferase (Streptomyces avermitilis (strain ATCC 31267 / DSM 46492 / JCM 5070 / NBRC 14893 / NCIMB 12804 / NRRL 8165 / MA-4680)).